We begin with the raw amino-acid sequence, 102 residues long: MYAIIETGGKQYRVEEGSKIVVEKLAAQAGSEISLDKVLMVGGAECKVGAPYLAGAAVTAEVVDHGRGPKIKVFKRWRRNDSRKMRGHRQDFTTIRVKSING.

Belongs to the bacterial ribosomal protein bL21 family. As to quaternary structure, part of the 50S ribosomal subunit. Contacts protein L20.

Functionally, this protein binds to 23S rRNA in the presence of protein L20. This chain is Large ribosomal subunit protein bL21, found in Desulfovibrio desulfuricans (strain ATCC 27774 / DSM 6949 / MB).